The sequence spans 729 residues: Beta-galactosidase 4 (729 aa).

Residues 1-35 form the signal peptide; sequence MAPAPTPAAAAGRRVAVLAAALVAASLAASVGVAN. Residue E194 is the Proton donor of the active site. E263 functions as the Nucleophile in the catalytic mechanism.

Belongs to the glycosyl hydrolase 35 family.

The protein resides in the secreted. Its subcellular location is the extracellular space. It is found in the apoplast. The catalysed reaction is Hydrolysis of terminal non-reducing beta-D-galactose residues in beta-D-galactosides.. This chain is Beta-galactosidase 4, found in Oryza sativa subsp. japonica (Rice).